A 442-amino-acid chain; its full sequence is GTPase Der (442 aa).

EngA-type G domains lie at proline 3–aspartate 167 and proline 177–methionine 350. Residues glycine 9–serine 16, aspartate 56–phenylalanine 60, asparagine 119–glutamate 122, glycine 183–serine 190, aspartate 230–leucine 234, and asparagine 295–aspartate 298 contribute to the GTP site. The KH-like domain maps to serine 351 to histidine 435.

This sequence belongs to the TRAFAC class TrmE-Era-EngA-EngB-Septin-like GTPase superfamily. EngA (Der) GTPase family. In terms of assembly, associates with the 50S ribosomal subunit.

Its function is as follows. GTPase that plays an essential role in the late steps of ribosome biogenesis. This is GTPase Der from Azoarcus sp. (strain BH72).